Consider the following 1087-residue polypeptide: Platelet-derived growth factor receptor alpha (1087 aa).

The N-terminal stretch at 1–24 (MMPAMRASLILGCLLIIGPWAILA) is a signal peptide. Residues 25–530 (ENPLPTIFPD…PTLRSELTVA (506 aa)) are Extracellular-facing. Ig-like C2-type domains follow at residues 27-114 (PLPT…SEIE) and 118-211 (IYIY…LQTW). Residues Cys-50 and Cys-101 are joined by a disulfide bond. Asn-77 and Asn-104 each carry an N-linked (GlcNAc...) asparagine glycan. A disulfide bond links Cys-151 and Cys-192. Residues Asn-216, Asn-282, Asn-309, Asn-356, Asn-362, Asn-461, and Asn-471 are each glycosylated (N-linked (GlcNAc...) asparagine). Ig-like C2-type domains follow at residues 217–309 (ISVE…KKTN), 315–409 (KGFI…KSYS), and 417–519 (PALI…LKLV). The cysteines at positions 238 and 293 are disulfide-linked. The cysteines at positions 438 and 503 are disulfide-linked. Residues 531 to 551 (AAVLVLLVIVIISLIVLVIIW) traverse the membrane as a helical segment. Topologically, residues 552-1087 (KQKPRYEIRW…SSDLVEDSFL (536 aa)) are cytoplasmic. Residues Tyr-574 and Tyr-576 each carry the phosphotyrosine; by autocatalysis modification. The region spanning 595 to 970 (LVLGRILGSG…CYETVLHDFL (376 aa)) is the Protein kinase domain. Residues 601-609 (LGSGAFGKV) and Lys-629 contribute to the ATP site. Phosphotyrosine; by autocatalysis is present on residues Tyr-722, Tyr-733, Tyr-744, Tyr-756, and Tyr-764. Asp-818 (proton acceptor) is an active-site residue. Phosphotyrosine; by autocatalysis occurs at positions 849, 988, and 1017. Residues 1017-1064 (YIIPLPDIDPVSEDESGKRNRHSSQTSEESAIETGSSSSTFIKRDDET) form a disordered region. Over residues 1039–1057 (SSQTSEESAIETGSSSSTF) the composition is skewed to polar residues.

This sequence belongs to the protein kinase superfamily. Tyr protein kinase family. CSF-1/PDGF receptor subfamily. In terms of assembly, interacts with homodimeric pdgfa, pdgfb and pdgfc, and with heterodimers formed by pdgfa and pdgfb. Monomer in the absence of bound ligand. Interaction with dimeric pdgfa, pdgfb and/or pdgfc leads to receptor dimerization, where both pdgfra homodimers and heterodimers with pdgfrb are observed. Post-translationally, ubiquitinated, leading to its internalization and degradation. In terms of processing, autophosphorylated on tyrosine residues upon ligand binding. Autophosphorylation occurs in trans, i.e. one subunit of the dimeric receptor phosphorylates tyrosine residues on the other subunit.

The protein resides in the cell membrane. The protein localises to the cell projection. It is found in the cilium. It localises to the golgi apparatus. It carries out the reaction L-tyrosyl-[protein] + ATP = O-phospho-L-tyrosyl-[protein] + ADP + H(+). Present in an inactive conformation in the absence of bound ligand. Binding of pdgfa and/or pdgfb leads to dimerization and activation by autophosphorylation on tyrosine residues. In terms of biological role, tyrosine-protein kinase that acts as a cell-surface receptor for pdgfa, pdgfb and pdgfc and plays an essential role in the regulation of embryonic development, cell proliferation, survival and chemotaxis. Depending on the context, promotes or inhibits cell proliferation and cell migration. Plays an important role in the differentiation of bone marrow-derived mesenchymal stem cells. Required for normal skeleton development. Required for normal development of the gastrointestinal tract. Plays a role in cell migration and chemotaxis in wound healing. Plays a role in platelet activation, secretion of agonists from platelet granules, and in thrombin-induced platelet aggregation. Binding of its cognate ligands - homodimeric pdgfa, homodimeric pdgfb, heterodimers formed by pdgfa and pdgfb or homodimeric pdgfc -leads to the activation of several signaling cascades; the response depends on the nature of the bound ligand and is modulated by the formation of heterodimers between pdgfra and pdgfrb. Phosphorylates pik3r1, plcg1, and ptpn11. Activation of plcg1 leads to the production of the cellular signaling molecules diacylglycerol and inositol 1,4,5-trisphosphate, mobilization of cytosolic Ca(2+) and the activation of protein kinase C. Phosphorylates pik3r1, the regulatory subunit of phosphatidylinositol 3-kinase, and thereby mediates activation of the akt1 signaling pathway. Mediates activation of hras and of the MAP kinases mapk1/erk2 and/or mapk3/erk1. Promotes activation of stat family members stat1, stat3 and stat5a and/or stat5b. Receptor signaling is down-regulated by protein phosphatases that dephosphorylate the receptor and its down-stream effectors, and by rapid internalization of the activated receptor. In Xenopus laevis (African clawed frog), this protein is Platelet-derived growth factor receptor alpha (pdgfra).